Consider the following 270-residue polypeptide: Formamidopyrimidine-DNA glycosylase (270 aa).

The active-site Schiff-base intermediate with DNA is P2. E3 (proton donor) is an active-site residue. The active-site Proton donor; for beta-elimination activity is K58. Residues H91, R110, and K151 each contribute to the DNA site. An FPG-type zinc finger spans residues 236–270 (FAYGRGGQPCKVCGTTLREIKLGQRASVYCPKCQR). Residue R260 is the Proton donor; for delta-elimination activity of the active site.

It belongs to the FPG family. In terms of assembly, monomer. Zn(2+) is required as a cofactor.

The catalysed reaction is Hydrolysis of DNA containing ring-opened 7-methylguanine residues, releasing 2,6-diamino-4-hydroxy-5-(N-methyl)formamidopyrimidine.. The enzyme catalyses 2'-deoxyribonucleotide-(2'-deoxyribose 5'-phosphate)-2'-deoxyribonucleotide-DNA = a 3'-end 2'-deoxyribonucleotide-(2,3-dehydro-2,3-deoxyribose 5'-phosphate)-DNA + a 5'-end 5'-phospho-2'-deoxyribonucleoside-DNA + H(+). Functionally, involved in base excision repair of DNA damaged by oxidation or by mutagenic agents. Acts as a DNA glycosylase that recognizes and removes damaged bases. Has a preference for oxidized purines, such as 7,8-dihydro-8-oxoguanine (8-oxoG). Has AP (apurinic/apyrimidinic) lyase activity and introduces nicks in the DNA strand. Cleaves the DNA backbone by beta-delta elimination to generate a single-strand break at the site of the removed base with both 3'- and 5'-phosphates. The chain is Formamidopyrimidine-DNA glycosylase from Pseudomonas syringae pv. tomato (strain ATCC BAA-871 / DC3000).